A 1501-amino-acid polypeptide reads, in one-letter code: Pleiotropic ABC efflux transporter of multiple drugs CDR1 (1501 aa).

Residues 1-30 (MSDSKMSSQDESKLEKAISQDSSSENHSIN) are disordered. Residues 1 to 513 (MSDSKMSSQD…NFLRMKGDPS (513 aa)) are Cytoplasmic-facing. Positions 2–512 (SDSKMSSQDE…RNFLRMKGDP (511 aa)) are NBD1. The segment covering 8-18 (SQDESKLEKAI) has biased composition (basic and acidic residues). Residues 150–404 (LATEGFRHFQ…FEKMGWKCPQ (255 aa)) enclose the ABC transporter 1 domain. A helical membrane pass occupies residues 514 to 534 (IPIFSVFGQLVMGLILSSVFY). At 535 to 548 (NLSQTTGSFYYRGA) the chain is on the extracellular side. Residues 549-569 (AMFFAVLFNAFSSLLEIMSLF) traverse the membrane as a helical segment. Residues 570 to 597 (EARPIVEKHKKYALYRPSADALASIISE) are Cytoplasmic-facing. Residues 598–618 (LPVKLAMSMSFNFVFYFMVNF) form a helical membrane-spanning segment. Topologically, residues 619 to 622 (RRNP) are extracellular. A helical transmembrane segment spans residues 623–643 (GRFFFYWLMCIWCTFVMSHLF). The Cytoplasmic portion of the chain corresponds to 644-654 (RSIGAVSTSIS). Residues 655 to 675 (GAMTPATVLLLAMVIYTGFVI) form a helical membrane-spanning segment. At 676–764 (PTPSMLGWSR…QYYNSHKWRN (89 aa)) the chain is on the extracellular side. Residues 765 to 785 (LGITIGFAVFFLAIYIALTEF) form a helical membrane-spanning segment. Residues 786 to 1195 (NKGAMQKGEI…TIVQDWRSPG (410 aa)) lie on the Cytoplasmic side of the membrane. Residues 786–1195 (NKGAMQKGEI…TIVQDWRSPG (410 aa)) form an NBD2 region. The ABC transporter 2 domain maps to 859 to 1103 (FFWRDLTYQV…MINYFEKYGA (245 aa)). Residue 895-902 (GASGAGKT) coordinates ATP. The stretch at 1137–1164 (RNSSEYQAVREEINRMEAELSKLPRDND) forms a coiled coil. Residues 1196-1216 (YIYSKIFLVVSAALFNGFSFF) traverse the membrane as a helical segment. The Extracellular portion of the chain corresponds to 1217-1229 (KAKNNMQGLQNQM). The chain crosses the membrane as a helical span at residues 1230–1250 (FSVFMFFIPFNTLVQQMLPYF). Topologically, residues 1251–1280 (VKQRDVYEVREAPSRTFSWFAFIAGQITSE) are cytoplasmic. A helical membrane pass occupies residues 1281–1301 (IPYQVAVGTIAFFCWYYPLGL). At 1302–1314 (YNNATPTDSVNPR) the chain is on the extracellular side. The chain crosses the membrane as a helical span at residues 1315 to 1335 (GVLMWMLVTAFYVYTATMGQL). Residues 1336–1355 (CMSFSELADNAANLATLLFT) are Cytoplasmic-facing. A helical membrane pass occupies residues 1356 to 1376 (MCLNFCGVLAGPDVLPGFWIF). The Extracellular segment spans residues 1377 to 1466 (MYRCNPFTYL…NSLYSERWRN (90 aa)). Residues 1467-1487 (FGIFIAFIAINIILTVIFYWL) traverse the membrane as a helical segment. The Cytoplasmic segment spans residues 1488–1501 (ARVPKGNREKKNKK).

Belongs to the ABC transporter superfamily.

It is found in the cell membrane. With respect to regulation, disulfiram reverses CDR1-mediated drug resistance by interaction with both ATP and substrate-binding sites of the transporter and may be useful for antifungal therapy. In terms of biological role, pleiotropic ABC efflux transporter that confers resistance to numerous chemicals including anisomycin, cycloheximide, fluconazole, miconazole, ketoconazole, itriconazole, nystatin, terbinafine, amorolfine, brefeldin A, amphotericin B, fluphenazine, as well as estrogen. Plays a role in farnesol-induced apoptotic process through glutathione efflux activity. Mediates in-to-out translocation of membrane phospholipids including aminophospholipids and thus regulates asymmetric distribution of phosphatidylethanolamine. Exhibits nucleoside triphosphatase activity. This Candida albicans (strain SC5314 / ATCC MYA-2876) (Yeast) protein is Pleiotropic ABC efflux transporter of multiple drugs CDR1 (CDR1).